The following is a 314-amino-acid chain: uncharacterized protein (314 aa).

The signal sequence occupies residues Met1–Ser18. 4 N-linked (GlcNAc...) asparagine glycosylation sites follow: Asn68, Asn72, Asn106, and Asn256.

It is found in the secreted. This is an uncharacterized protein from Caenorhabditis elegans.